A 382-amino-acid polypeptide reads, in one-letter code: Serine/arginine-rich splicing factor SR45a (382 aa).

Composition is skewed to low complexity over residues 30–45 (PMSYSRRSRYSPSLSP), 54–68 (VSRSLSRSPTRSVSS), 177–195 (PSYSPRRSVSCSRSRSRSY), and 202–219 (SYSPSYGRRGRSSSYSPF). Disordered stretches follow at residues 30 to 76 (PMSY…PGNS) and 150 to 382 (KARR…SVSP). The segment covering 288-316 (RARDRSCSPYYRGRDRSYSPHYQGRDRSY) has biased composition (basic and acidic residues). Over residues 329 to 343 (VSGSVSPGGRSMSRS) the composition is skewed to low complexity. Residues 345–361 (SPRKGRKESRSKSRRHD) show a composition bias toward basic residues. Residues 364 to 382 (SSMCHSRSARSSTSRSVSP) are compositionally biased toward low complexity.

It belongs to the splicing factor SR family. SR45 subfamily. In terms of assembly, component of the spliceosome. Homodimer. Interacts with PRP38, SCL28, SR45, RNU1 and U2AF35B. Post-translationally, phosphorylated. In terms of tissue distribution, expressed in leaves, stems and roots.

The protein resides in the nucleus speckle. Its function is as follows. Probable splicing factor involved in constitutive and/or alternative splicing events. May bridge the 5' and 3' components of the spliceosome. The sequence is that of Serine/arginine-rich splicing factor SR45a (SR45A) from Arabidopsis thaliana (Mouse-ear cress).